The chain runs to 1612 residues: DNA topoisomerase 2-beta (1612 aa).

Alanine 2 carries the post-translational modification N-acetylalanine. The residue at position 3 (lysine 3) is an N6-acetyllysine. Glycyl lysine isopeptide (Lys-Gly) (interchain with G-Cter in SUMO2) cross-links involve residues lysine 21 and lysine 22. ATP is bound by residues asparagine 100, asparagine 129, and 157-159 (SSN). Residues lysine 165 and lysine 166 each participate in a glycyl lysine isopeptide (Lys-Gly) (interchain with G-Cter in SUMO2) cross-link. 170 to 177 (GRNGYGAK) contacts ATP. Residues lysine 216 and lysine 287 each participate in a glycyl lysine isopeptide (Lys-Gly) (interchain with G-Cter in SUMO2) cross-link. The interval 351–353 (KKK) is interaction with DNA. Glycyl lysine isopeptide (Lys-Gly) (interchain with G-Cter in SUMO2) cross-links involve residues lysine 355 and lysine 361. 385–387 (QTK) contributes to the ATP binding site. Residues lysine 425, lysine 427, and lysine 434 each participate in a glycyl lysine isopeptide (Lys-Gly) (interchain with G-Cter in SUMO2) cross-link. Positions 464–581 (CTLILTEGDS…SLLKHGFLEE (118 aa)) constitute a Toprim domain. Mg(2+) is bound by residues glutamate 470, aspartate 550, and aspartate 552. Residues lysine 588, lysine 593, lysine 623, lysine 631, lysine 634, lysine 664, and lysine 700 each participate in a glycyl lysine isopeptide (Lys-Gly) (interchain with G-Cter in SUMO2) cross-link. Positions 724–1177 (IPSLVDGFKP…SPSDLWKEDL (454 aa)) constitute a Topo IIA-type catalytic domain. Tyrosine 814 serves as the catalytic O-(5'-phospho-DNA)-tyrosine intermediate. The interval 999–1008 (KLQTTLTCNS) is interaction with DNA. A Glycyl lysine isopeptide (Lys-Gly) (interchain with G-Cter in SUMO2) cross-link involves residue lysine 1080. The segment at 1098–1128 (AWKEAQEKAAEEEDSQNQHDDSSSDSGTPSG) is disordered. Residues lysine 1202, lysine 1205, lysine 1214, and lysine 1215 each participate in a glycyl lysine isopeptide (Lys-Gly) (interchain with G-Cter in SUMO2) cross-link. Position 1224 is a phosphoserine (serine 1224). Residues lysine 1238, lysine 1250, and lysine 1259 each participate in a glycyl lysine isopeptide (Lys-Gly) (interchain with G-Cter in SUMO2) cross-link. The segment at 1245-1586 (LLKKKKGDPD…FTSEPPALPR (342 aa)) is disordered. Position 1280 is a phosphothreonine (threonine 1280). Residues lysine 1311 and lysine 1315 each participate in a glycyl lysine isopeptide (Lys-Gly) (interchain with G-Cter in SUMO2) cross-link. 2 stretches are compositionally biased toward basic and acidic residues: residues 1322–1332 (PWSDDESKSES) and 1346–1358 (SLLR…RPKY). Phosphoserine occurs at positions 1324, 1328, 1330, 1332, and 1346. A Phosphotyrosine modification is found at tyrosine 1358. The segment covering 1362–1379 (FSEEEDDDAAAADDSNDL) has biased composition (acidic residues). A phosphoserine mark is found at serine 1363 and serine 1376. Residue lysine 1385 forms a Glycyl lysine isopeptide (Lys-Gly) (interchain with G-Cter in SUMO2) linkage. Serine 1387 carries the phosphoserine modification. Threonine 1390 bears the Phosphothreonine mark. Serine 1400 carries the post-translational modification Phosphoserine. Tyrosine 1408 is subject to Phosphotyrosine. Phosphoserine is present on serine 1411. The segment covering 1417–1429 (ATPEKSSNDKKSQ) has biased composition (basic and acidic residues). Lysine 1427 is covalently cross-linked (Glycyl lysine isopeptide (Lys-Gly) (interchain with G-Cter in SUMO2)). Phosphoserine is present on residues serine 1428, serine 1439, and serine 1441. Lysine 1443 participates in a covalent cross-link: Glycyl lysine isopeptide (Lys-Gly) (interchain with G-Cter in SUMO2). Residues 1443-1453 (KSEDDSAKFDS) show a composition bias toward basic and acidic residues. Phosphoserine occurs at positions 1448, 1453, and 1460. Residue lysine 1477 forms a Glycyl lysine isopeptide (Lys-Gly) (interchain with G-Cter in SUMO2) linkage. The tract at residues 1493 to 1499 (KAKRAPK) is interaction with PLSCR1. 3 positions are modified to phosphoserine: serine 1509, serine 1511, and serine 1513. The span at 1526-1536 (GKGRGAKKRKA) shows a compositional bias: basic residues. Residues serine 1537 and serine 1539 each carry the phosphoserine modification. The span at 1550–1561 (KPSKTASKKPKK) shows a compositional bias: basic residues. Threonine 1562 bears the Phosphothreonine mark. Serine 1563 and serine 1568 each carry phosphoserine. Tyrosine 1596 is subject to Phosphotyrosine. Serine 1600 carries the post-translational modification Phosphoserine.

This sequence belongs to the type II topoisomerase family. As to quaternary structure, homodimer. Interacts with KIAA1210. Interacts with PLSCR1. Mg(2+) serves as cofactor. Mn(2+) is required as a cofactor. It depends on Ca(2+) as a cofactor.

It is found in the nucleus. The protein localises to the nucleolus. It localises to the nucleoplasm. It carries out the reaction ATP-dependent breakage, passage and rejoining of double-stranded DNA.. In terms of biological role, key decatenating enzyme that alters DNA topology by binding to two double-stranded DNA molecules, generating a double-stranded break in one of the strands, passing the intact strand through the broken strand, and religating the broken strand. Plays a role in B-cell differentiation. This Mus musculus (Mouse) protein is DNA topoisomerase 2-beta (Top2b).